Consider the following 338-residue polypeptide: Ribosomal RNA small subunit methyltransferase C (338 aa).

Belongs to the methyltransferase superfamily. RsmC family. In terms of assembly, monomer.

The protein localises to the cytoplasm. It catalyses the reaction guanosine(1207) in 16S rRNA + S-adenosyl-L-methionine = N(2)-methylguanosine(1207) in 16S rRNA + S-adenosyl-L-homocysteine + H(+). In terms of biological role, specifically methylates the guanine in position 1207 of 16S rRNA in the 30S particle. This is Ribosomal RNA small subunit methyltransferase C from Photorhabdus laumondii subsp. laumondii (strain DSM 15139 / CIP 105565 / TT01) (Photorhabdus luminescens subsp. laumondii).